Consider the following 141-residue polypeptide: Putative pre-16S rRNA nuclease (141 aa).

It belongs to the YqgF nuclease family.

The protein localises to the cytoplasm. Could be a nuclease involved in processing of the 5'-end of pre-16S rRNA. The protein is Putative pre-16S rRNA nuclease of Cupriavidus pinatubonensis (strain JMP 134 / LMG 1197) (Cupriavidus necator (strain JMP 134)).